Here is a 73-residue protein sequence, read N- to C-terminus: Stigmurin (73 aa).

An N-terminal signal peptide occupies residues methionine 1 to alanine 22. Lysine 39 carries the lysine amide modification. The propeptide occupies glutamate 45–tyrosine 73.

Belongs to the non-disulfide-bridged peptide (NDBP) superfamily. Short antimicrobial peptide (group 4) family. As to expression, expressed by the venom gland.

It localises to the secreted. Functionally, antimicrobial peptide with activity against Gram-positive bacterial strains (S.aureus (MIC=2-140 uM), methicillin-resistant S.aureus (MRSA) (MIC=8-17 uM), S.epidermidis (MIC=1.17 uM), and the yeasts C.albicans, C.krusei, and C.glabrata (MIC=34-69 uM)). Acts by disrupting the cell membrane (observed on outer layer of the S.aureus). Is not active against Gram-negative bacteria (E.coli, E.Cloacae, P.aeruginosa), and the Gram-positive bacterium E.faecalis. Also shows toxicity against several cell lines, but possess low hemolytic activity at the highest concentration tested. Also shows antiparasitic activity against Trypanosoma cruzi by decreasing the viability of the epimastigote and trypomastigote forms of the parasite. Displays high hydroxyl radical scavenging activity (antioxidant action). In a wound infection model, the topical application of this peptide demonstrates antibacterial effects, as well as an ability to accelerate wound closure speed, which suggests the induction of tissue repair. In the model of polymicrobial sepsis, it exhibits an antibiotic effect, reducing the levels of microorganisms in the infectious focus and the inflammatory responses in the lung and cecum of septic animals. This is Stigmurin from Tityus stigmurus (Brazilian scorpion).